Here is a 306-residue protein sequence, read N- to C-terminus: Curved DNA-binding protein (306 aa).

Residues 5-69 enclose the J domain; the sequence is DYYAIMGVKP…QRRAEYDQMW (65 aa).

It is found in the cytoplasm. Its subcellular location is the nucleoid. In terms of biological role, DNA-binding protein that preferentially recognizes a curved DNA sequence. It is probably a functional analog of DnaJ; displays overlapping activities with DnaJ, but functions under different conditions, probably acting as a molecular chaperone in an adaptive response to environmental stresses other than heat shock. Lacks autonomous chaperone activity; binds native substrates and targets them for recognition by DnaK. Its activity is inhibited by the binding of CbpM. The sequence is that of Curved DNA-binding protein from Shigella sonnei (strain Ss046).